The following is a 420-amino-acid chain: MSNTQKQLALAKAAKKSVNTADTEEKNRALFAMADSLEAAAADILAANRQDLEAAAGNIPESMTDRLLLDGKRICAMADGIRAVAALPDPVGEILETSTLPNGLEIVKKRVAMGVIGIIYESRPNVTSDAAALALKSGSAVVLRSGKDAFQSARAIVAALKTGLAQTRIDPDALQLIEDTGRESSYEMMRAKDYLDLLIPRGGAGLIRAVVENAVVPVIETGTGIVHIYIDKDADWDKALRIVYNAKTSRPSVCNSMEVLLVHEDIAADFLPKLERLLVRNRIEAGLPPVRFRLDPQAARHIGGEAAGADDFDTEFLDYILAVKTVASVEEAVGHIEAHGTHHSDGIVTENRHAADYFTTHIDSAAVYVNASTRFTDGGEFGLGCEMGISTQKLHARGPMGLKELTSYKYIVQGTGQVRE.

It belongs to the gamma-glutamyl phosphate reductase family.

It is found in the cytoplasm. It catalyses the reaction L-glutamate 5-semialdehyde + phosphate + NADP(+) = L-glutamyl 5-phosphate + NADPH + H(+). The protein operates within amino-acid biosynthesis; L-proline biosynthesis; L-glutamate 5-semialdehyde from L-glutamate: step 2/2. Its function is as follows. Catalyzes the NADPH-dependent reduction of L-glutamate 5-phosphate into L-glutamate 5-semialdehyde and phosphate. The product spontaneously undergoes cyclization to form 1-pyrroline-5-carboxylate. This chain is Gamma-glutamyl phosphate reductase, found in Neisseria meningitidis serogroup A / serotype 4A (strain DSM 15465 / Z2491).